A 222-amino-acid polypeptide reads, in one-letter code: Small ribosomal subunit protein uS3 (222 aa).

Residues 39–108 enclose the KH type-2 domain; it reads IRKFIKKELF…NVLINIVEVK (70 aa).

This sequence belongs to the universal ribosomal protein uS3 family. As to quaternary structure, part of the 30S ribosomal subunit. Forms a tight complex with proteins S10 and S14.

Binds the lower part of the 30S subunit head. Binds mRNA in the 70S ribosome, positioning it for translation. The protein is Small ribosomal subunit protein uS3 of Clostridium perfringens (strain ATCC 13124 / DSM 756 / JCM 1290 / NCIMB 6125 / NCTC 8237 / Type A).